A 278-amino-acid chain; its full sequence is Large ribosomal subunit protein uL2 (278 aa).

Positions 201–278 (HGNINDGKAG…IMRSRHQKKK (78 aa)) are disordered. Positions 210–221 (GRSRWRGKRPHV) are enriched in basic residues.

The protein belongs to the universal ribosomal protein uL2 family. As to quaternary structure, part of the 50S ribosomal subunit. Forms a bridge to the 30S subunit in the 70S ribosome.

Its function is as follows. One of the primary rRNA binding proteins. Required for association of the 30S and 50S subunits to form the 70S ribosome, for tRNA binding and peptide bond formation. It has been suggested to have peptidyltransferase activity; this is somewhat controversial. Makes several contacts with the 16S rRNA in the 70S ribosome. This Allorhizobium ampelinum (strain ATCC BAA-846 / DSM 112012 / S4) (Agrobacterium vitis (strain S4)) protein is Large ribosomal subunit protein uL2.